The sequence spans 264 residues: Ribonuclease H (264 aa).

The interval 55 to 88 (GSRYSSSSGPYRRSTTSYGYSPYSSSSSNYSARH) is disordered. A compositionally biased stretch (low complexity) spans 56-85 (SRYSSSSGPYRRSTTSYGYSPYSSSSSNYS). At Ser-97 the chain carries Phosphoserine. The region spanning 120–263 (CSDRQVVYAD…ADMLARRGAS (144 aa)) is the RNase H type-1 domain. Residues Asp-129, Glu-171, Asp-191, and Asp-255 each contribute to the Mg(2+) site.

This sequence belongs to the RNase H family. Requires Mg(2+) as cofactor.

It catalyses the reaction Endonucleolytic cleavage to 5'-phosphomonoester.. Endonuclease that specifically degrades the RNA of RNA-DNA hybrids. This chain is Ribonuclease H (rnh1), found in Schizosaccharomyces pombe (strain 972 / ATCC 24843) (Fission yeast).